A 541-amino-acid polypeptide reads, in one-letter code: Chaperonin GroEL (541 aa).

Residues 29–32 (TLGP), 86–90 (DGTTT), G413, 476–478 (NAA), and D492 each bind ATP.

This sequence belongs to the chaperonin (HSP60) family. In terms of assembly, forms a cylinder of 14 subunits composed of two heptameric rings stacked back-to-back. Interacts with the co-chaperonin GroES.

Its subcellular location is the cytoplasm. It catalyses the reaction ATP + H2O + a folded polypeptide = ADP + phosphate + an unfolded polypeptide.. Its function is as follows. Together with its co-chaperonin GroES, plays an essential role in assisting protein folding. The GroEL-GroES system forms a nano-cage that allows encapsulation of the non-native substrate proteins and provides a physical environment optimized to promote and accelerate protein folding. The polypeptide is Chaperonin GroEL (Enterococcus faecalis (strain ATCC 700802 / V583)).